Reading from the N-terminus, the 231-residue chain is Maleylacetoacetate isomerase maiA (231 aa).

A GST N-terminal domain is found at 7 to 93 (PKVTLYTYFR…YLEEITPASS (87 aa)). A GST C-terminal domain is found at 102-224 (NPEARAVVRT…HWRTQPDTPE (123 aa)).

Belongs to the GST superfamily. Zeta family.

The catalysed reaction is 4-maleylacetoacetate = 4-fumarylacetoacetate. It functions in the pathway amino-acid degradation; L-phenylalanine degradation; acetoacetate and fumarate from L-phenylalanine: step 5/6. Maleylacetoacetate isomerase; part of the L-tyrosine degradation gene cluster that mediates the biosynthesis of the brownish pigment pyomelanin as an alternative melanin. The 4-hydroxyphenylpyruvate dioxygenase hppD catalyzes the conversion of 4-hydroxyphenylpyruvate to homogentisic acid (HGA). The protein hmgX is crucial for this conversion and thus, probably functions as an accessory factor to mediate specific activity of hppD. The homogentisate 1,2-dioxygenase hmgA is then involved in the cleavage of the aromatic ring of HGA and its conversion to 4-maleylacetoacetate. When hmgA activity is lowered by the cell wall integrity (CWI) signaling pathway, HGA accumulates and leads to the production of pyomelanin through benzoquinone acetic acid after oxidation and polymerization. On the opposite, in non-stress conditions, both hppD and hmgA activities are balanced and HGA is degraded into 4-maleylacetoacetate. 4-maleylacetoacetate is further converted to 4-fumarylacetoacetate by the maleylacetoacetate isomerase maiA, which is degraded into fumarate and acetoacetate by the fumarylacetoacetase fahA. The chain is Maleylacetoacetate isomerase maiA from Aspergillus fumigatus (strain ATCC MYA-4609 / CBS 101355 / FGSC A1100 / Af293) (Neosartorya fumigata).